A 159-amino-acid polypeptide reads, in one-letter code: Lipoprotein LpqH (159 aa).

Positions 1–21 are cleaved as a signal peptide; it reads MKRGLTVAVAGAAILVAGLSG. C22 is lipidated: N-palmitoyl cysteine. C22 is lipidated: S-diacylglycerol cysteine. The interval 24 to 51 is disordered; that stretch reads SNKSTTGSGETTTAAGTTASPGAASGPK. Over residues 27–49 the composition is skewed to low complexity; that stretch reads STTGSGETTTAAGTTASPGAASG.

The protein belongs to the mycobacterial 19 kDa antigen family. In terms of processing, modified by Lgt on Cys-22 with an S-linked diacylglycerol with a mixture of C16, C18 and C19 fatty acids, signal peptide is removed by LspA, modifed by Lnt with an amide-linked mixture of C16 and C19 fatty acids.

It localises to the cell membrane. In terms of biological role, might be involved in ligand transport. A host TLR2 agonist, modifies host gene expression in response to pathogen. In Mycobacterium bovis (strain ATCC BAA-935 / AF2122/97), this protein is Lipoprotein LpqH (lpqH).